Here is a 257-residue protein sequence, read N- to C-terminus: MVLIRVLANLLILQLSYAQKSSKLVVGGDECNINEHPFLVLVYHDGYQCGGTLINEEWVLTAAHCDGKKMKLRFGLHSKNVPNKDKQTRVPKEKFFCLSSKYFIKWGKDIMLIRLNRPVNNSTHIAPLSLPSSPPSQNTVCNIMGWGTISPTKEIYPDVPHCANISILDHAVCRAFYPGLLEKSKTLCAGILEGGKDICQGDSGGPLICNGQIQGIVSVGGNPCAEPRVPAIYTKVFDHLDWIKSIIAGNTAATCPL.

Positions 1 to 18 (MVLIRVLANLLILQLSYA) are cleaved as a signal peptide. Positions 19 to 24 (QKSSKL) are excised as a propeptide. The Peptidase S1 domain maps to 25 to 248 (VVGGDECNIN…HLDWIKSIIA (224 aa)). Disulfide bonds link Cys31/Cys162, Cys49/Cys65, Cys97/Cys255, Cys141/Cys209, Cys173/Cys188, and Cys199/Cys224. Active-site charge relay system residues include His64 and Asp109. N-linked (GlcNAc...) asparagine glycans are attached at residues Asn120, Asn121, and Asn164. Residue Ser203 is the Charge relay system of the active site.

Belongs to the peptidase S1 family. Snake venom subfamily. In terms of assembly, monomer. As to expression, expressed by the venom gland.

The protein localises to the secreted. Snake venom serine protease that may act in the hemostasis system of the prey. The chain is Snake venom serine protease KN3 from Trimeresurus stejnegeri (Chinese green tree viper).